Reading from the N-terminus, the 312-residue chain is Methionyl-tRNA formyltransferase (312 aa).

Residue 112–115 participates in (6S)-5,6,7,8-tetrahydrofolate binding; that stretch reads SLLP.

It belongs to the Fmt family.

The catalysed reaction is L-methionyl-tRNA(fMet) + (6R)-10-formyltetrahydrofolate = N-formyl-L-methionyl-tRNA(fMet) + (6S)-5,6,7,8-tetrahydrofolate + H(+). Its function is as follows. Attaches a formyl group to the free amino group of methionyl-tRNA(fMet). The formyl group appears to play a dual role in the initiator identity of N-formylmethionyl-tRNA by promoting its recognition by IF2 and preventing the misappropriation of this tRNA by the elongation apparatus. In Syntrophus aciditrophicus (strain SB), this protein is Methionyl-tRNA formyltransferase.